We begin with the raw amino-acid sequence, 500 residues long: L-arabinose isomerase (500 aa).

Residues Glu-306, Glu-333, His-350, and His-450 each coordinate Mn(2+).

The protein belongs to the arabinose isomerase family. Homohexamer. The cofactor is Mn(2+).

The enzyme catalyses beta-L-arabinopyranose = L-ribulose. The protein operates within carbohydrate degradation; L-arabinose degradation via L-ribulose; D-xylulose 5-phosphate from L-arabinose (bacterial route): step 1/3. Catalyzes the conversion of L-arabinose to L-ribulose. The protein is L-arabinose isomerase of Escherichia coli O17:K52:H18 (strain UMN026 / ExPEC).